The following is a 158-amino-acid chain: MNIYMTDEGKLLTEEQLKLVEAILVYTATEEKIEANSELSVTFVTNDEIQQINREWRGKDQATDVISFAMDELGEDEIDFELLEDEPVVLGDLIISVERCREQAAEYGNHFERELGFLAVHGFLHLLGYDHIEKADEDIMTKRQEEILHHFELYRGKL.

Residues His121, His125, and His131 each contribute to the Zn(2+) site.

The protein belongs to the endoribonuclease YbeY family. Zn(2+) serves as cofactor.

The protein resides in the cytoplasm. Single strand-specific metallo-endoribonuclease involved in late-stage 70S ribosome quality control and in maturation of the 3' terminus of the 16S rRNA. The chain is Endoribonuclease YbeY from Exiguobacterium sibiricum (strain DSM 17290 / CCUG 55495 / CIP 109462 / JCM 13490 / 255-15).